We begin with the raw amino-acid sequence, 181 residues long: ATP synthase subunit delta (181 aa).

Belongs to the ATPase delta chain family. F-type ATPases have 2 components, F(1) - the catalytic core - and F(0) - the membrane proton channel. F(1) has five subunits: alpha(3), beta(3), gamma(1), delta(1), epsilon(1). F(0) has three main subunits: a(1), b(2) and c(10-14). The alpha and beta chains form an alternating ring which encloses part of the gamma chain. F(1) is attached to F(0) by a central stalk formed by the gamma and epsilon chains, while a peripheral stalk is formed by the delta and b chains.

It is found in the cell inner membrane. In terms of biological role, f(1)F(0) ATP synthase produces ATP from ADP in the presence of a proton or sodium gradient. F-type ATPases consist of two structural domains, F(1) containing the extramembraneous catalytic core and F(0) containing the membrane proton channel, linked together by a central stalk and a peripheral stalk. During catalysis, ATP synthesis in the catalytic domain of F(1) is coupled via a rotary mechanism of the central stalk subunits to proton translocation. Functionally, this protein is part of the stalk that links CF(0) to CF(1). It either transmits conformational changes from CF(0) to CF(1) or is implicated in proton conduction. The chain is ATP synthase subunit delta from Chlorobium phaeovibrioides (strain DSM 265 / 1930) (Prosthecochloris vibrioformis (strain DSM 265)).